The following is a 456-amino-acid chain: UPF0496 protein 4 (456 aa).

Residues 195–217 (VLMRALYGIESVTVFVCSIFVAV) traverse the membrane as a helical segment. Residues 368–390 (QDSNVKQANGSSDESALVVPERT) are disordered. Polar residues predominate over residues 371 to 381 (NVKQANGSSDE).

The protein belongs to the ROH1 family.

Its subcellular location is the membrane. The chain is UPF0496 protein 4 from Oryza sativa subsp. japonica (Rice).